The chain runs to 216 residues: Minor capsid protein P6 (216 aa).

Residues 1-21 (MILVGIAVLILLAVFAILYYK) are hydrophobic.

Interacts with the major capsid protein.

The protein localises to the virion. Its function is as follows. One of the minor capsid proteins that constitute a network internal to the major capsid proteins and outside the lipid membrane. The minor capsid proteins glue and stabilize the capsomers. This Paramecium bursaria Chlorella virus 1 (PBCV-1) protein is Minor capsid protein P6.